A 236-amino-acid chain; its full sequence is Small ribosomal subunit protein uS2c (236 aa).

It belongs to the universal ribosomal protein uS2 family.

It is found in the plastid. The protein localises to the chloroplast. In Vitis vinifera (Grape), this protein is Small ribosomal subunit protein uS2c (rps2).